Here is a 162-residue protein sequence, read N- to C-terminus: NADH-quinone oxidoreductase subunit I (162 aa).

2 4Fe-4S ferredoxin-type domains span residues 52-82 and 93-122; these read LRRYPNGEERCIACKLCEAICPAQAITIEAG and TRYDIDMVKCIYCGMCQEACPVDAIVEGPN. Residues Cys62, Cys65, Cys68, Cys72, Cys102, Cys105, Cys108, and Cys112 each contribute to the [4Fe-4S] cluster site.

The protein belongs to the complex I 23 kDa subunit family. NDH-1 is composed of 14 different subunits. Subunits NuoA, H, J, K, L, M, N constitute the membrane sector of the complex. It depends on [4Fe-4S] cluster as a cofactor.

The protein localises to the cell inner membrane. It carries out the reaction a quinone + NADH + 5 H(+)(in) = a quinol + NAD(+) + 4 H(+)(out). Functionally, NDH-1 shuttles electrons from NADH, via FMN and iron-sulfur (Fe-S) centers, to quinones in the respiratory chain. The immediate electron acceptor for the enzyme in this species is believed to be ubiquinone. Couples the redox reaction to proton translocation (for every two electrons transferred, four hydrogen ions are translocated across the cytoplasmic membrane), and thus conserves the redox energy in a proton gradient. This chain is NADH-quinone oxidoreductase subunit I, found in Methylorubrum populi (strain ATCC BAA-705 / NCIMB 13946 / BJ001) (Methylobacterium populi).